We begin with the raw amino-acid sequence, 215 residues long: Ras-related protein Rab-5A (215 aa).

GTP-binding residues include S29, A30, G32, K33, S34, S35, H46, E47, T52, and G78. Mg(2+) is bound at residue S34. Short sequence motifs (switch) lie at residues 44-56 and 77-93; these read QFHE…IGAA and AGQE…YRGA. T52 serves as a coordination point for Mg(2+). S84 carries the post-translational modification Phosphoserine. 5 residues coordinate GTP: N133, K134, D136, A164, and K165. The disordered stretch occupies residues 181-215; that stretch reads LPKNEPQNPGANSARGRGVDLTEPAQPARSQCCSN. 2 S-geranylgeranyl cysteine lipidation sites follow: C212 and C213.

Belongs to the small GTPase superfamily. Rab family. As to quaternary structure, interacts with GDI1; this promotes dissociation from membranes; phosphorylation at Ser-84 disrupts this interaction. Interacts with GDI2; phosphorylation at Ser-84 disrupts the interaction. Interacts with EEA1. Interacts with RIN1 and GAPVD1, which regulate its pathway, probably by acting as a GEF. Interacts with RINL. Interacts with ALS2CL, SUN2, ZFYVE20 and RUFY1. Interacts with RABEP1; one RABEP1 homodimer binds two RAB5A chains, but at opposite sides of the dimer. Interacts with SGSM1 and SGSM3. Interacts with PIK3CB. Interacts with OCRL and INPP5F. May be a component of a complex composed of RAB5A, DYN2 and PIK3C3. Does not interact with BLOC-3 complex (heterodimer of HPS1 and HPS4). Interacts with CLN5. Interacts with APPL2. Interacts with F8A1/F8A2/F8A3. Found in a complex with F8A1/F8A2/F8A3, HTT and RAB5A; mediates the recruitment of HTT by RAB5A onto early endosomes. Interacts with ATP9A. Interacts with PPP1R21; mediates the recruitment of FERRY complex by RAB5A onto early endosomes. Mg(2+) is required as a cofactor. Phosphorylation of Ser-84 in the switch II region by LRRK2 prevents the association of RAB regulatory proteins, including RAB GDP dissociation inhibitors GDI1 and GDI2.

It localises to the cell membrane. It is found in the early endosome membrane. The protein localises to the melanosome. The protein resides in the cytoplasmic vesicle. Its subcellular location is the cell projection. It localises to the ruffle. It is found in the membrane. The protein localises to the cytoplasm. The protein resides in the cytosol. Its subcellular location is the phagosome membrane. It localises to the endosome membrane. The enzyme catalyses GTP + H2O = GDP + phosphate + H(+). Regulated by guanine nucleotide exchange factors (GEFs) including RINL, which promote the exchange of bound GDP for free GTP. Regulated by GTPase activating proteins (GAPs) which increase the GTP hydrolysis activity. Inhibited by GDP dissociation inhibitors (GDIs). Its function is as follows. The small GTPases Rab are key regulators of intracellular membrane trafficking, from the formation of transport vesicles to their fusion with membranes. Rabs cycle between an inactive GDP-bound form and an active GTP-bound form that is able to recruit to membranes different sets of downstream effectors directly responsible for vesicle formation, movement, tethering and fusion. RAB5A is required for the fusion of plasma membranes and early endosomes. Contributes to the regulation of filopodia extension. Required for the exosomal release of SDCBP, CD63, PDCD6IP and syndecan. Regulates maturation of apoptotic cell-containing phagosomes, probably downstream of DYN2 and PIK3C3. This chain is Ras-related protein Rab-5A, found in Mus musculus (Mouse).